Reading from the N-terminus, the 207-residue chain is 3-demethoxyubiquinol 3-hydroxylase (207 aa).

Residues Glu56, Glu86, His89, Glu138, Glu170, and His173 each contribute to the Fe cation site.

This sequence belongs to the COQ7 family. Fe cation serves as cofactor.

Its subcellular location is the cell membrane. The catalysed reaction is a 5-methoxy-2-methyl-3-(all-trans-polyprenyl)benzene-1,4-diol + AH2 + O2 = a 3-demethylubiquinol + A + H2O. Its pathway is cofactor biosynthesis; ubiquinone biosynthesis. Its function is as follows. Catalyzes the hydroxylation of 2-nonaprenyl-3-methyl-6-methoxy-1,4-benzoquinol during ubiquinone biosynthesis. The sequence is that of 3-demethoxyubiquinol 3-hydroxylase from Dechloromonas aromatica (strain RCB).